Reading from the N-terminus, the 226-residue chain is Cold-regulated 413 inner membrane protein 2, chloroplastic (226 aa).

The transit peptide at 1–76 directs the protein to the chloroplast; it reads MASLCLSSSR…RKRGSSVVCY (76 aa). The Stromal portion of the chain corresponds to 77 to 79; it reads ATP. Residues 80-100 form a helical membrane-spanning segment; sequence MLSVHNLQWISTISCVALMFA. Topologically, residues 101–103 are chloroplast intermembrane; that stretch reads RGT. The helical transmembrane segment at 104 to 124 threads the bilayer; the sequence is GIHKSFVVPLFALQAPMGIVS. Topologically, residues 125–129 are stromal; that stretch reads WMKGE. The chain crosses the membrane as a helical span at residues 130–150; sequence YGIWAAFLALLTRLFFSFPVE. The Chloroplast intermembrane segment spans residues 151–152; the sequence is LE. A helical membrane pass occupies residues 153-173; that stretch reads LPFIALLLVIVAPYQVMSIRG. The Stromal segment spans residues 174 to 176; it reads KQE. Residues 177 to 197 traverse the membrane as a helical segment; the sequence is GAILSLAISCFLAFQHFSRAG. The Chloroplast intermembrane portion of the chain corresponds to 198–205; the sequence is TLQKAFDQ. Residues 206-226 traverse the membrane as a helical segment; sequence NSVLATVAIIGVTVVSFLFLI.

This sequence belongs to the Cold-regulated 413 protein family.

Its subcellular location is the plastid. It localises to the chloroplast inner membrane. In Arabidopsis thaliana (Mouse-ear cress), this protein is Cold-regulated 413 inner membrane protein 2, chloroplastic (COR413IM2).